The sequence spans 63 residues: Large ribosomal subunit protein bL32 (63 aa).

A disordered region spans residues 1-27 (MANPKAKMSKSRRDKRRAQFNARTKPA). Positions 7-18 (KMSKSRRDKRRA) are enriched in basic residues.

It belongs to the bacterial ribosomal protein bL32 family.

The chain is Large ribosomal subunit protein bL32 from Pelodictyon phaeoclathratiforme (strain DSM 5477 / BU-1).